We begin with the raw amino-acid sequence, 210 residues long: Thiamine-phosphate synthase 2 (210 aa).

4-amino-2-methyl-5-(diphosphooxymethyl)pyrimidine is bound by residues 38-42 and aspartate 70; that span reads QLREK. Mg(2+) contacts are provided by aspartate 71 and glutamate 90. Threonine 109 lines the 4-amino-2-methyl-5-(diphosphooxymethyl)pyrimidine pocket. 2-[(2R,5Z)-2-carboxy-4-methylthiazol-5(2H)-ylidene]ethyl phosphate is bound at residue 135–137; sequence TTT. Lysine 138 is a binding site for 4-amino-2-methyl-5-(diphosphooxymethyl)pyrimidine. Glycine 165 provides a ligand contact to 2-[(2R,5Z)-2-carboxy-4-methylthiazol-5(2H)-ylidene]ethyl phosphate.

Belongs to the thiamine-phosphate synthase family. Requires Mg(2+) as cofactor.

It carries out the reaction 2-[(2R,5Z)-2-carboxy-4-methylthiazol-5(2H)-ylidene]ethyl phosphate + 4-amino-2-methyl-5-(diphosphooxymethyl)pyrimidine + 2 H(+) = thiamine phosphate + CO2 + diphosphate. The catalysed reaction is 2-(2-carboxy-4-methylthiazol-5-yl)ethyl phosphate + 4-amino-2-methyl-5-(diphosphooxymethyl)pyrimidine + 2 H(+) = thiamine phosphate + CO2 + diphosphate. It catalyses the reaction 4-methyl-5-(2-phosphooxyethyl)-thiazole + 4-amino-2-methyl-5-(diphosphooxymethyl)pyrimidine + H(+) = thiamine phosphate + diphosphate. It functions in the pathway cofactor biosynthesis; thiamine diphosphate biosynthesis; thiamine phosphate from 4-amino-2-methyl-5-diphosphomethylpyrimidine and 4-methyl-5-(2-phosphoethyl)-thiazole: step 1/1. Condenses 4-methyl-5-(beta-hydroxyethyl)thiazole monophosphate (THZ-P) and 2-methyl-4-amino-5-hydroxymethyl pyrimidine pyrophosphate (HMP-PP) to form thiamine monophosphate (TMP). This is Thiamine-phosphate synthase 2 from Streptococcus pneumoniae serotype 4 (strain ATCC BAA-334 / TIGR4).